Consider the following 900-residue polypeptide: Formin-like protein 5 (900 aa).

A helical; Signal-anchor membrane pass occupies residues 15–32; the sequence is SRLVFWLILFSGLLVITL. Residues 136 to 209 are disordered; sequence RNLATKPGSS…PVSPAKKKED (74 aa). The span at 160–173 shows a compositional bias: pro residues; it reads PPRPPTRPKSPPPR. The chain crosses the membrane as a helical span at residues 214–234; that stretch reads IIIAVVVTAVSTFLLAALFFL. Disordered stretches follow at residues 273–440 and 849–900; these read SVKG…DAPK and ARGR…SDSD. Over residues 281–304 the composition is skewed to polar residues; the sequence is HQSFNIYSNQGKMSSFDGSNSDTS. Basic and acidic residues predominate over residues 307–316; the sequence is LEERLSHEGL. The segment covering 359 to 368 has biased composition (low complexity); it reads FLKVSSKKAS. Over residues 369-429 the composition is skewed to pro residues; it reads APPPPVPAPQ…GPKAPRPPSG (61 aa). Residues 433-865 enclose the FH2 domain; that stretch reads ALDDDAPKTK…MARKQGSTAS (433 aa). A compositionally biased stretch (polar residues) spans 860-876; the sequence is QGSTASASSETPRQTPS.

The protein belongs to the formin-like family. Class-I subfamily. In terms of tissue distribution, expressed in the endosperm. Localizes to the cell plate, a plant-specific membranous component that is assembled at the plane of cell division.

Its subcellular location is the membrane. Might be involved in the organization and polarity of the actin cytoskeleton. Interacts with the barbed end of actin filaments and nucleates actin-filament polymerization in vitro. Seems to play a role in cytokinesis. This is Formin-like protein 5 (FH5) from Arabidopsis thaliana (Mouse-ear cress).